A 229-amino-acid chain; its full sequence is Ribosome maturation factor RimM (229 aa).

Positions 148 to 229 (ADEFYWVDLI…RVVVDWEADY (82 aa)) constitute a PRC barrel domain.

Belongs to the RimM family. As to quaternary structure, binds ribosomal protein uS19.

Its subcellular location is the cytoplasm. In terms of biological role, an accessory protein needed during the final step in the assembly of 30S ribosomal subunit, possibly for assembly of the head region. Essential for efficient processing of 16S rRNA. May be needed both before and after RbfA during the maturation of 16S rRNA. It has affinity for free ribosomal 30S subunits but not for 70S ribosomes. In Burkholderia pseudomallei (strain 1710b), this protein is Ribosome maturation factor RimM.